The chain runs to 380 residues: Palmitoyltransferase ZDHHC20 (380 aa).

Over 1–14 the chain is Cytoplasmic; sequence MAPWTLWRCCQRVV. A helical transmembrane segment spans residues 15 to 35; sequence GWVPVLFITFVVVWSYYAYVV. Over 36 to 53 the chain is Lumenal; that stretch reads ELCVSTISRTGEKGKTVV. Residues 54 to 74 form a helical membrane-spanning segment; that stretch reads YLVAFHLFFVMFVWSYWMTIF. The Cytoplasmic segment spans residues 75–169; sequence TSPASPSKEF…NNCVGFTNYK (95 aa). In terms of domain architecture, DHHC spans 126-176; that stretch reads RYCEKCQLIKPDRAHHCSACDRCVLKMDHHCPWVNNCVGFTNYKFFMLFLL. Zn(2+) is bound by residues C128 and C131. Substrate is bound by residues K135 and 140 to 143; that span reads HHCS. 5 residues coordinate Zn(2+): H141, C142, C145, C148, and H155. The S-palmitoyl cysteine intermediate role is filled by C156. C162 lines the Zn(2+) pocket. A helical membrane pass occupies residues 170 to 190; sequence FFMLFLLYSLLYCLFVAATVL. The Lumenal segment spans residues 191 to 222; it reads EYFIKFWTLCRRKSTENCPKNEPTVLNFPSAK. A helical transmembrane segment spans residues 223–246; that stretch reads FHVLFLFFVSAMFFVSVLSLFSYH. Residues 247 to 380 lie on the Cytoplasmic side of the membrane; the sequence is CWLVGKNRTT…NNHVTVEIEN (134 aa). S320, S345, and S354 each carry phosphoserine.

It belongs to the DHHC palmitoyltransferase family. In terms of processing, autopalmitoylated (in vitro). As to expression, highest levels in lung.

It is found in the golgi apparatus membrane. The protein resides in the cell membrane. It localises to the cytoplasm. Its subcellular location is the perinuclear region. The protein localises to the endoplasmic reticulum membrane. It is found in the endoplasmic reticulum-Golgi intermediate compartment membrane. The catalysed reaction is L-cysteinyl-[protein] + hexadecanoyl-CoA = S-hexadecanoyl-L-cysteinyl-[protein] + CoA. The enzyme catalyses L-cysteinyl-[protein] + tetradecanoyl-CoA = S-tetradecanoyl-L-cysteinyl-[protein] + CoA. It carries out the reaction L-cysteinyl-[protein] + octadecanoyl-CoA = S-octadecanoyl-L-cysteinyl-[protein] + CoA. Functionally, palmitoyltransferase that could catalyze the addition of palmitate onto various protein substrates. Catalyzes palmitoylation of Cys residues in the cytoplasmic C-terminus of EGFR, and modulates the duration of EGFR signaling by modulating palmitoylation-dependent EGFR internalization and degradation. Has a preference for acyl-CoA with C16 fatty acid chains. Can also utilize acyl-CoA with C14 and C18 fatty acid chains. May palmitoylate CALHM1 subunit of gustatory voltage-gated ion channels and modulate channel gating and kinetics. The protein is Palmitoyltransferase ZDHHC20 of Mus musculus (Mouse).